The chain runs to 905 residues: Heme/hemopexin-binding protein (905 aa).

The N-terminal stretch at 1-21 (MYKLNVISLIILTTYTGATYA) is a signal peptide.

It localises to the secreted. Its function is as follows. Binds heme/hemopexin complexes. The protein is Heme/hemopexin-binding protein (hxuA) of Haemophilus influenzae (strain ATCC 51907 / DSM 11121 / KW20 / Rd).